Consider the following 470-residue polypeptide: Alpha-galactosidase (470 aa).

The first 18 residues, 1–18, serve as a signal peptide directing secretion; that stretch reads MFSLLLLTSTALVETALG. A disulfide bridge links Cys-42 with Cys-74. The N-linked (GlcNAc...) asparagine glycan is linked to Asn-43. The substrate site is built by Asp-72 and Asp-73. An N-linked (GlcNAc...) asparagine glycan is attached at Asn-82. Cysteines 121 and 151 form a disulfide. Lys-147 contributes to the substrate binding site. The active-site Nucleophile is Asp-149. Asn-175 carries N-linked (GlcNAc...) asparagine glycosylation. Arg-205 provides a ligand contact to substrate. Asp-209 (proton donor) is an active-site residue. 2 disulfides stabilise this stretch: Cys-221–Cys-237 and Cys-223–Cys-230. Gln-251 serves as a coordination point for substrate. N-linked (GlcNAc...) asparagine glycans are attached at residues Asn-270, Asn-388, Asn-413, Asn-422, Asn-435, and Asn-454.

The protein belongs to the glycosyl hydrolase 27 family. In terms of assembly, homotetramer.

It is found in the secreted. It carries out the reaction Hydrolysis of terminal, non-reducing alpha-D-galactose residues in alpha-D-galactosides, including galactose oligosaccharides, galactomannans and galactolipids.. This chain is Alpha-galactosidase (MEL), found in Zygotorulaspora mrakii (Zygosaccharomyces mrakii).